Here is a 406-residue protein sequence, read N- to C-terminus: O-glycosyltransferase PaGT (406 aa).

Residues 1–26 (MSPPSQIKPPQGTTPVPPSELDPRSD) are disordered.

It belongs to the afumC glycosyltransferase family.

Its pathway is mycotoxin biosynthesis. In terms of biological role, O-glycosyltransferase; part of the 2 gene clusters that mediate the biosynthesis of fusicoccins, diterpene glucosides that display phytohormone-like activity and function as potent activators of plasma membrane H(+)-ATPases in plants by modifying 14-3-3 proteins and cause the plant disease constriction canker. The first step in the pathway is performed by the fusicoccadiene synthase PaFS that possesses both prenyl transferase and terpene cyclase activity, converting isopentenyl diphosphate and dimethylallyl diphosphate into geranylgeranyl diphosphate (GGDP) and successively converting GGDP into fusicocca-2,10(14)-diene, a precursor for fusicoccin H. The second step is the oxidation at the C-8 position by the cytochrome P450 monooxygenase PaP450-2 to yield fusicocca-2,10(14)-diene-8-beta-ol. The cytochrome P450 monooxygenase PaP450-1 then catalyzes the hydroxylation at the C-16 position to produce fusicocca-2,10(14)-diene-8-beta,16-diol. The dioxygenase fc-dox then catalyzes the 16-oxydation of fusicocca-2,10(14)-diene-8-beta,16-diol to yield an aldehyde (8-beta-hydroxyfusicocca-1,10(14)-dien-16-al). The short-chain dehydrogenase/reductase fc-sdr catalyzes the reduction of the aldehyde to yield fusicocca-1,10(14)-diene-8-beta,16-diol. The next step is the hydroxylation at C-9 performed by the cytochrome P450 monooxygenase PaP450-3 that leads to fusicoccin H aglycon which is glycosylated to fusicoccin H by the O-glycosyltransferase PaGT. Hydroxylation at C-12 by the cytochrome P450 monooxygenase PaP450-4 leads then to the production of fusicoccin Q and is followed by methylation by the O-methyltransferase PaMT to yield fusicoccin P. Fusicoccin P is further converted to fusicoccin J via prenylation by the O-glucose prenyltransferase PaPT. Cytochrome P450 monooxygenase PaP450-5 then performs hydroxylation at C-19 to yield dideacetyl-fusicoccin A which is acetylated to 3'-O-deacetyl-fusicoccin A by the O-acetyltransferase PaAT-2. Finally, a another acetylation by the O-acetyltransferase PaAT-1 yields fusicoccin A. This Phomopsis amygdali (Fusicoccum amygdali) protein is O-glycosyltransferase PaGT.